A 1123-amino-acid polypeptide reads, in one-letter code: MDKYEEIKTIGKGSFGRAILVKRKSDGLLLVLKEINVMEMQPKERSDAMNEVNLLSMLDHENIIGYYDSFILNGCLYIIMEYANAGDINLEIKKRTLQNKTFSEFEILSWFSQICKALQYISSRNILHRDLKTQNIFLSIVNGDYFIKLGDFGIAKILNSETSLASTVLGTPYYLSPELIQNEKGYDHKSDIWSLGCVLYELTTLKHAFNAANLPALVLKILKGTYPPIPSHYSNDLRNLISSMLQIDPKNRPSVNDILELPFINQYLGIPLKPFDSNLNENNNDSLNISNNSSGSNNSASNNISSSTEVKDQKFQNIPLAMARNINNNNNNNNNNNNNNNNNNNNNNNNNNNNNNNNNNNNNNNNKSNVDDVNSSSTTTTSSSIVKSKVNTTVSPPLSPKKPITTTTTKTTSLKTTPSIKPTLVKTPTIKSSLVKTPLSKTPISGTKNPTTSKITPSIKTPLPKAPISSKTPTRLVSKPTTPKITTPKSTSTMITPKRTTTTTTTPTPTTATTTPKKSSLSSSSSSSVKPPPPTTTTTTPSKDRSSVNTINKPMASNLSSQISSSSSSSSSSNSQFRPTTPSKERMSPTSTSTKSPTNPSPTLSSSSSLPKSSLKSDSLCTSPPRFSNTTGSSGGIGVSGNGNSNVNSTVLNRSVSSLSIQHKPTNSGSSSISSSSSGNNSNSNTTTNNNTTSTTPIRPGLKSTKSMLELSTPTSISTSNKSTTTTPTSSRSNTPSTGRLSLTTSIPRPPSSNGSNTGSSSSTTTTPTKISTTSSSSSLNKLTTPIKSSTTTSTTASTNSQTIKKSITPIKVTSQQVDSTISNIKNNIVIGNSVSTKTNISVISHLSPSIKPLPTQSIITQLPTSASTASTASTTNTTLTSGTNTMTTKKRTDFKLDDLGHRSKLNSVKLSSKSSSPIKTSSSSSSSSSSSSSITDKKSINRVKLNNLKEKNKEIINNIKISSTIPKPSNINSSSSSAFSDLNSSGSSSLNNSLTSSSSSIITNQNNQNNQNNQNNQNNQNNLKIINELILQNNLNNSISKENLDDKRLHSRANALRHFCSSIFGEDKFKETYNLLKSQSPSTSNNEIVDIASIENQLSQLIGDKIYYLKYLQQLIYCESQI.

Residues 4–264 (YEEIKTIGKG…VNDILELPFI (261 aa)) form the Protein kinase domain. Residues 10–18 (IGKGSFGRA) and Lys33 contribute to the ATP site. The Proton acceptor role is filled by Asp130. 2 stretches are compositionally biased toward low complexity: residues 283–307 (NNDS…ISSS) and 327–415 (NNNN…TSLK). 6 disordered regions span residues 283–310 (NNDS…STEV), 325–415 (NINN…TSLK), 440–802 (SKTP…TNSQ), 866–887 (SAST…TNTM), 908–937 (SVKL…SITD), and 990–1020 (SLNN…NQNN). Polar residues predominate over residues 440–459 (SKTPISGTKNPTTSKITPSI). Composition is skewed to low complexity over residues 478–529 (SKPT…SSSV), 557–576 (SNLS…SNSQ), 588–617 (SPTS…SLKS), and 642–653 (NGNSNVNSTVLN). Residues 654 to 665 (RSVSSLSIQHKP) are compositionally biased toward polar residues. 3 stretches are compositionally biased toward low complexity: residues 666 to 696 (TNSG…TSTT), 712 to 738 (STPT…TPST), and 752 to 802 (SSNG…TNSQ). Over residues 908 to 935 (SVKLSSKSSSPIKTSSSSSSSSSSSSSI) the composition is skewed to low complexity.

It belongs to the protein kinase superfamily. NEK Ser/Thr protein kinase family. NIMA subfamily.

It catalyses the reaction L-seryl-[protein] + ATP = O-phospho-L-seryl-[protein] + ADP + H(+). It carries out the reaction L-threonyl-[protein] + ATP = O-phospho-L-threonyl-[protein] + ADP + H(+). The chain is Probable serine/threonine-protein kinase nek3 (nek3) from Dictyostelium discoideum (Social amoeba).